The chain runs to 648 residues: A-type voltage-gated potassium channel KCND1 (648 aa).

Over 1 to 183 (MAAGVATWLP…RAFENPHTST (183 aa)) the chain is Cytoplasmic. The interaction with KCNIP1, KCNIP2, and other family members stretch occupies residues 2 to 20 (AAGVATWLPFARAAAVGWL). The segment at 2 to 20 (AAGVATWLPFARAAAVGWL) is interaction with KCNIP2. Zn(2+) is bound by residues His-104, Cys-131, and Cys-132. Residues 144 to 164 (AERLAEDEEAEQAGDGPTLPA) form a disordered region. Residues 184–205 (AALVFYYVTGFFIAVSVIANVV) traverse the membrane as a helical segment. Over 206–230 (ETIPCRSPTRRPPREQPCGDRFPLA) the chain is Extracellular. The helical transmembrane segment at 231 to 252 (FFCMDTACVLIFTGEYLLRLFA) threads the bilayer. Residues 253–263 (APSRCRFLRSV) lie on the Cytoplasmic side of the membrane. A helical transmembrane segment spans residues 264-284 (MSLIDVVAILPYYIGLFMPKN). Over 285–287 (EDV) the chain is Extracellular. A helical; Voltage-sensor membrane pass occupies residues 288 to 308 (SGAFVTLRVFRVFRIFKFSRH). The Cytoplasmic portion of the chain corresponds to 309 to 323 (SQGLRILGYTLKSCA). Positions 310 to 323 (QGLRILGYTLKSCA) are S4-S5 linker. A helical transmembrane segment spans residues 324 to 345 (SELGFLLFSLTMAIIIFATVMF). The Extracellular portion of the chain corresponds to 346-359 (YAEKGTNKTNFTSI). N-linked (GlcNAc...) asparagine glycans are attached at residues Asn-352 and Asn-355. The helical intramembrane region spans 360–371 (PAAFWYTIVTMT). The Selectivity filter signature appears at 372 to 377 (TLGYGD). Residues 372–379 (TLGYGDMV) lie within the membrane without spanning it. Topologically, residues 380-386 (PSTIAGK) are extracellular. The chain crosses the membrane as a helical span at residues 387-415 (IFGSICSLSGVLVIALPVPVIVSNFSRIY). Over 416–648 (HQNQRADKRR…LPETVKISSL (233 aa)) the chain is Cytoplasmic. Position 458 is a phosphoserine (Ser-458). Positions 474–489 (FEQQHHHLLHCLEKTT) are mediates dendritic targeting. Residues 474 to 489 (FEQQHHHLLHCLEKTT) are required for dendritic targeting. Ser-555 carries the post-translational modification Phosphoserine. Residues 601–636 (IPTPPANTPDESQPSSPGGGGGGASSTLRNSSLGTP) are disordered.

This sequence belongs to the potassium channel family. D (Shal) (TC 1.A.1.2) subfamily. Kv4.1/KCND1 sub-subfamily. As to quaternary structure, component of heteromultimeric potassium channels. Identified in potassium channel complexes containing KCND1, KCND2, KCND3, KCNIP1, KCNIP2, KCNIP3, KCNIP4, DPP6 and DPP10.

Its subcellular location is the cell membrane. It catalyses the reaction K(+)(in) = K(+)(out). Functionally, A-type voltage-gated potassium channel that mediates transmembrane potassium transport in excitable membranes in the brain. Mediates A-type current I(SA) in suprachiasmatic nucleus (SCN) neurons. Exhibits a low-threshold A-type current with a hyperpolarized steady-state inactivation midpoint and the recovery process was steeply voltage-dependent, with recovery being markedly faster at more negative potentials. May regulates repetitive firing rates in the suprachiasmatic nucleus (SCN) neurons and circadian rhythms in neuronal excitability and behavior. Contributes to the regulation of the circadian rhythm of action potential firing in suprachiasmatic nucleus neurons, which regulates the circadian rhythm of locomotor activity. The regulatory subunit KCNIP1 modulates the kinetics of channel inactivation, increases the current amplitudes and accelerates recovery from inactivation, shifts activation in a depolarizing direction. The regulatory subunit DPP10 decreases the voltage sensitivity of the inactivation channel gating. This Bos taurus (Bovine) protein is A-type voltage-gated potassium channel KCND1.